The chain runs to 92 residues: MEFLLQLENILKKRKQDLPDKSYTADLFRGGVDRILKKVGEEAGEVIIAAKNSDKKELTHEVADLLFHLQVLLVEQGLSLQEIVEELHKRHS.

This sequence belongs to the PRA-PH family.

The protein resides in the cytoplasm. It catalyses the reaction 1-(5-phospho-beta-D-ribosyl)-ATP + H2O = 1-(5-phospho-beta-D-ribosyl)-5'-AMP + diphosphate + H(+). It participates in amino-acid biosynthesis; L-histidine biosynthesis; L-histidine from 5-phospho-alpha-D-ribose 1-diphosphate: step 2/9. The sequence is that of Phosphoribosyl-ATP pyrophosphatase from Leptospira interrogans serogroup Icterohaemorrhagiae serovar copenhageni (strain Fiocruz L1-130).